The sequence spans 185 residues: Protein OPG161 (185 aa).

Residues Met-1 to Ile-33 are Intravirion-facing. Residues Gly-34–Ile-56 traverse the membrane as a helical segment. Topologically, residues Val-57–Asn-185 are virion surface. Residues Glu-98–Asn-185 form a C-type lectin-like domain region. Residues Asn-125 and Asn-135 are each glycosylated (N-linked (GlcNAc...) asparagine; by host).

Belongs to the orthopoxvirus OPG161 family. As to quaternary structure, homodimer, disulfide-linked. Interacts with protein OPG190. Interacts (via C-terminus) with protein OPG164. Interacts with OPG162.

The protein resides in the virion membrane. The protein localises to the host membrane. Its function is as follows. Forms a complex with OPG162 and OPG190 to coordinate the incorporation of OPG164 into wrapped enveloped virion (EV) membranes and, subsequently, the production of actin tails. Therefore plays an essential role in efficient cell-to-cell spread of viral particles. The polypeptide is Protein OPG161 (OPG161) (Homo sapiens (Human)).